The chain runs to 646 residues: DEAD-box ATP-dependent RNA helicase 52 (646 aa).

2 disordered regions span residues 1 to 64 and 76 to 117; these read MSSN…ANSG and GSGY…PAVN. Ser-2 carries the post-translational modification N-acetylserine. Gly residues-rich tracts occupy residues 54–64 and 76–87; these read DRGGYGGANSG and GSGYGGRGGPVG. The Q motif signature appears at 146–174; it reads NTFAEIDLGEALNLNIQRCKYVKPTPVQR. The Helicase ATP-binding domain occupies 177–361; sequence IPILAAGRDL…SDFLSNYIFL (185 aa). 190 to 197 serves as a coordination point for ATP; sequence AQTGSGKT. Residues 305–308 carry the DEAD box motif; sequence DEAD. In terms of domain architecture, Helicase C-terminal spans 388-539; sequence HLMDLLHAQR…EVPDWLTRYA (152 aa).

It belongs to the DEAD box helicase family. DDX3/DED1 subfamily.

It catalyses the reaction ATP + H2O = ADP + phosphate + H(+). The sequence is that of DEAD-box ATP-dependent RNA helicase 52 (RH52) from Arabidopsis thaliana (Mouse-ear cress).